Reading from the N-terminus, the 507-residue chain is Maturase K (507 aa).

This sequence belongs to the intron maturase 2 family. MatK subfamily.

It is found in the plastid. The protein resides in the chloroplast. In terms of biological role, usually encoded in the trnK tRNA gene intron. Probably assists in splicing its own and other chloroplast group II introns. The protein is Maturase K of Buxus microphylla (Littleleaf boxwood).